The primary structure comprises 515 residues: ATP synthase subunit alpha (515 aa).

Residue 171 to 178 (GDRQTGKT) coordinates ATP.

Belongs to the ATPase alpha/beta chains family. F-type ATPases have 2 components, CF(1) - the catalytic core - and CF(0) - the membrane proton channel. CF(1) has five subunits: alpha(3), beta(3), gamma(1), delta(1), epsilon(1). CF(0) has three main subunits: a(1), b(2) and c(9-12). The alpha and beta chains form an alternating ring which encloses part of the gamma chain. CF(1) is attached to CF(0) by a central stalk formed by the gamma and epsilon chains, while a peripheral stalk is formed by the delta and b chains.

The protein resides in the cell inner membrane. It carries out the reaction ATP + H2O + 4 H(+)(in) = ADP + phosphate + 5 H(+)(out). In terms of biological role, produces ATP from ADP in the presence of a proton gradient across the membrane. The alpha chain is a regulatory subunit. This Xylella fastidiosa (strain M12) protein is ATP synthase subunit alpha.